A 322-amino-acid polypeptide reads, in one-letter code: MDNADPNEPVYPCPICGRKFVKSSLEKHESACRKLATLHRKPFDSGKQRANGSDLTYAAIKKAQNEKAKNGGVFPRPQTNWRERHGNFIDAVSSSKRVDYALKTGAPLPPPPKTAVPSDYVQCEYCSRNFNAAAAERHIPFCREQTTRKQGGKSSAGNRGLTSNNYRSLPSKHEGRKQESSSRNGSAERKTTTRGRDGSLSRARRDDSNDLTNRRKSLETRSQLTTGQANNRTTSLSAGTRPALPPMTPSSKRSSSAKRDLPPNPTTHQRLKTPAPKTTTTASASRSGSGSSSRTRTRDESRESRLSQAKSNSRNNSRSRIF.

2 consecutive C2HC/C3H-type zinc fingers follow at residues 9 to 38 (PVYP…LATL) and 119 to 148 (DYVQ…QTTR). Zn(2+) is bound by residues Cys13, Cys16, His28, Cys32, Cys123, Cys126, His138, and Cys142. The disordered stretch occupies residues 144 to 322 (EQTTRKQGGK…SRNNSRSRIF (179 aa)). Over residues 148–168 (RKQGGKSSAGNRGLTSNNYRS) the composition is skewed to polar residues. Basic and acidic residues predominate over residues 171-219 (SKHEGRKQESSSRNGSAERKTTTRGRDGSLSRARRDDSNDLTNRRKSLE). Residues 220 to 238 (TRSQLTTGQANNRTTSLSA) show a composition bias toward polar residues. The span at 278-294 (TTTTASASRSGSGSSSR) shows a compositional bias: low complexity. Residues 296–305 (RTRDESRESR) are compositionally biased toward basic and acidic residues. The span at 311-322 (SNSRNNSRSRIF) shows a compositional bias: low complexity.

This sequence belongs to the ZC2HC1 family. Requires Zn(2+) as cofactor.

This chain is Zinc finger C2HC domain-containing protein CBG14627, found in Caenorhabditis briggsae.